The primary structure comprises 712 residues: Interleukin-1 receptor-associated kinase 1 (712 aa).

The 80-residue stretch at 27 to 106 (MCRFYKVMDA…DIITAWHPPA (80 aa)) folds into the Death domain. Thr66 carries the post-translational modification Phosphothreonine; by PKC/PRKCI. The segment at 105–187 (PAPLPSPGTT…STKPGPESSV (83 aa)) is disordered. The segment at 110–211 (SPGTTAPRPS…LCEISRGTHN (102 aa)) is proST region. The span at 115-133 (APRPSSIPAPAEAEAWSPR) shows a compositional bias: low complexity. Ser131 carries the post-translational modification Phosphoserine. Lys134 is covalently cross-linked (Glycyl lysine isopeptide (Lys-Gly) (interchain with G-Cter in ubiquitin)). Positions 137 to 154 (SSASTFLSPAFPGSQTHS) are enriched in polar residues. Lys180 is covalently cross-linked (Glycyl lysine isopeptide (Lys-Gly) (interchain with G-Cter in ubiquitin)). The residue at position 209 (Thr209) is a Phosphothreonine; by IRAK4. Residues 212–521 (FSEELKIGEG…TQVYERLEKL (310 aa)) enclose the Protein kinase domain. ATP-binding positions include 218 to 226 (IGEGGFGCV) and Lys239. Asp340 acts as the Proton acceptor in catalysis. Residues 342–345 (KSSN) and Asp358 each bind ATP. Ser371 and Ser375 each carry phosphoserine. Thr387 is subject to Phosphothreonine. Disordered stretches follow at residues 532 to 591 (SEAA…SDES), 613 to 660 (APLR…PPQI), and 690 to 712 (SSLP…EFQS). A compositionally biased stretch (polar residues) spans 543–553 (QENSYVSSTGR). Ser556 bears the Phosphoserine mark. 2 stretches are compositionally biased toward low complexity: residues 562–575 (QPLA…AQAA) and 643–658 (EGLA…SEPP).

Belongs to the protein kinase superfamily. TKL Ser/Thr protein kinase family. Pelle subfamily. Homodimer. Forms a complex with TRAF6, PELI1, IRAK4 and MYD88. Direct binding of SMAD6 to PELI1 prevents complex formation and hence negatively regulates IL1R-TLR signaling and eventually NF-kappa-B-mediated gene expression. The TRAF6-PELI1-IRAK4-MYD88 complex recruits MAP3K7/TAK1, TAB1 and TAB2 to mediate NF-kappa-B activation. Interaction with MYD88 recruits IRAK1 to the stimulated receptor complex. Interacts with TOLLIP; this interaction occurs in the cytosol prior to receptor activation. Interacts with IL1RL1. Interacts with PELI1 and TRAF6. Interacts (when polyubiquitinated) with IKBKG/NEMO. Interacts with RSAD2/viperin. Interacts with IRAK1BP1. Interacts with PELI2. Interacts with ZC3H12A; this interaction increases the interaction between ZC3H12A and IKBKB/IKKB. Interacts with IRAK4. Interacts with PELI3. Interacts with INAVA; the interaction takes place upon PRR stimulation. Interacts (via C-terminus) with NFATC4 (via N-terminus). In terms of assembly, (Microbial infection) Interacts with mumps virus protein SH; this interaction inhibits downstream NF-kappa-B pathway activation. As to quaternary structure, (Microbial infection) Interacts with alphaviruses SINV, CHIKV, RRV, VEEV and EEEV capsid proteins; the interactions lead to inhibition of IRAK1-dependent signaling. Mg(2+) serves as cofactor. Post-translationally, following recruitment on the activated receptor complex, phosphorylated on Thr-209, probably by IRAK4, resulting in a conformational change of the kinase domain, allowing further phosphorylations to take place. Thr-387 phosphorylation in the activation loop is required to achieve full enzymatic activity. In terms of processing, polyubiquitinated by TRAF6 after cell stimulation with IL-1-beta by PELI1, PELI2 and PELI3. Polyubiquitination occurs with polyubiquitin chains linked through 'Lys-63'. Ubiquitination promotes interaction with NEMO/IKBKG. Also sumoylated; leading to nuclear translocation. In terms of tissue distribution, isoform 1 and isoform 2 are ubiquitously expressed in all tissues examined, with isoform 1 being more strongly expressed than isoform 2.

The protein resides in the cytoplasm. It localises to the nucleus. The protein localises to the lipid droplet. It carries out the reaction L-seryl-[protein] + ATP = O-phospho-L-seryl-[protein] + ADP + H(+). It catalyses the reaction L-threonyl-[protein] + ATP = O-phospho-L-threonyl-[protein] + ADP + H(+). Functionally, serine/threonine-protein kinase that plays a critical role in initiating innate immune response against foreign pathogens. Involved in Toll-like receptor (TLR) and IL-1R signaling pathways. Is rapidly recruited by MYD88 to the receptor-signaling complex upon TLR activation. Association with MYD88 leads to IRAK1 phosphorylation by IRAK4 and subsequent autophosphorylation and kinase activation. Phosphorylates E3 ubiquitin ligases Pellino proteins (PELI1, PELI2 and PELI3) to promote pellino-mediated polyubiquitination of IRAK1. Then, the ubiquitin-binding domain of IKBKG/NEMO binds to polyubiquitinated IRAK1 bringing together the IRAK1-MAP3K7/TAK1-TRAF6 complex and the NEMO-IKKA-IKKB complex. In turn, MAP3K7/TAK1 activates IKKs (CHUK/IKKA and IKBKB/IKKB) leading to NF-kappa-B nuclear translocation and activation. Alternatively, phosphorylates TIRAP to promote its ubiquitination and subsequent degradation. Phosphorylates the interferon regulatory factor 7 (IRF7) to induce its activation and translocation to the nucleus, resulting in transcriptional activation of type I IFN genes, which drive the cell in an antiviral state. When sumoylated, translocates to the nucleus and phosphorylates STAT3. This chain is Interleukin-1 receptor-associated kinase 1, found in Homo sapiens (Human).